We begin with the raw amino-acid sequence, 620 residues long: Glutathione-regulated potassium-efflux system protein KefC (620 aa).

Over 1-3 (MDS) the chain is Periplasmic. The helical transmembrane segment at 4–24 (HTLIQALIYLGSAALIVPIAV) threads the bilayer. Arg-25 is a topological domain (cytoplasmic). The helical transmembrane segment at 26–46 (LGLGSVLGYLIAGCIIGPWGL) threads the bilayer. At 47–53 (RLVTDAE) the chain is on the periplasmic side. The chain crosses the membrane as a helical span at residues 54 to 74 (SILHFAEIGVVLMLFIIGLEL). Over 75-89 (DPQRLWKLRAAVFGG) the chain is Cytoplasmic. Residues 90–110 (GALQMVICGGLLGLFCMLLGL) traverse the membrane as a helical segment. The Periplasmic segment spans residues 111–113 (RWQ). The helical transmembrane segment at 114-134 (VAELIGMTLALSSTAIAMQAM) threads the bilayer. The Cytoplasmic segment spans residues 135–148 (NERNLMVTQMGRSA). The chain crosses the membrane as a helical span at residues 149-169 (FAVLLFQDIAAIPLVAMIPLL). Over 170–177 (AASSASTT) the chain is Periplasmic. A helical transmembrane segment spans residues 178 to 198 (MGAFVLSALKVAGALALVVLL). Residues 199–213 (GRYVTRPALRFVARS) are Cytoplasmic-facing. The helical transmembrane segment at 214–233 (GLREVFSAVALFLVFGFGLL) threads the bilayer. Over 234-236 (LEE) the chain is Periplasmic. A helical transmembrane segment spans residues 237–254 (VGLSMAMGAFLAGVLLAS). At 255–269 (SEYRHALESDIEPFK) the chain is on the cytoplasmic side. A helical membrane pass occupies residues 270–290 (GLLLGLFFIGVGMSIDFGTLL). Residues 291–293 (ENP) are Periplasmic-facing. Residues 294–314 (LRIVILLLGFLIIKIAMLWLI) traverse the membrane as a helical segment. Over 315–326 (ARPLQVPNKQRR) the chain is Cytoplasmic. Residues 327–347 (WFAVLLGQGSEFAFVVFGAAQ) traverse the membrane as a helical segment. Residues 348–358 (MANVLEPEWAK) lie on the Periplasmic side of the membrane. The chain crosses the membrane as a helical span at residues 359-379 (SLTLAVALSMAATPILLVILN). Residues 380 to 620 (RLEQSSTEEA…ADEPETKPSS (241 aa)) lie on the Cytoplasmic side of the membrane. The 120-residue stretch at 399–518 (QPRVIIAGFG…AGVEKPERET (120 aa)) folds into the RCK N-terminal domain. Positions 597–620 (GWQGTEEGKHTGNMADEPETKPSS) are disordered.

This sequence belongs to the monovalent cation:proton antiporter 2 (CPA2) transporter (TC 2.A.37) family. KefC subfamily. As to quaternary structure, homodimer. Interacts with the regulatory subunit KefF.

It localises to the cell inner membrane. In terms of biological role, pore-forming subunit of a potassium efflux system that confers protection against electrophiles. Catalyzes K(+)/H(+) antiport. The protein is Glutathione-regulated potassium-efflux system protein KefC of Escherichia coli O6:H1 (strain CFT073 / ATCC 700928 / UPEC).